Consider the following 288-residue polypeptide: Long chain fatty acid elongase 1 (288 aa).

7 consecutive transmembrane segments (helical) span residues 39–59 (FFAD…VVVF), 73–93 (LTIP…AGAV), 126–146 (WVWL…FLVL), 150–170 (PLMF…WYSH), 180–197 (GIYL…YYFL), 217–237 (IVQF…MHFT), and 247–267 (VFKL…NFFL).

This sequence belongs to the ELO family.

Its subcellular location is the membrane. It carries out the reaction (6Z,9Z,12Z)-octadecatrienoyl-CoA + malonyl-CoA + H(+) = (8Z,11Z,14Z)-3-oxoeicosatrienoyl-CoA + CO2 + CoA. The catalysed reaction is (6Z,9Z,12Z,15Z)-octadecatetraenoyl-CoA + malonyl-CoA + H(+) = (8Z,11Z,14Z,17Z)-3-oxoicosatetraenoyl-CoA + CO2 + CoA. It catalyses the reaction (9Z)-hexadecenoyl-CoA + malonyl-CoA + H(+) = 3-oxo-(11Z)-octadecenoyl-CoA + CO2 + CoA. It participates in lipid metabolism; fatty acid biosynthesis. In terms of biological role, catalyzes the first and rate-limiting reaction of the four reactions that constitute the long-chain fatty acids elongation cycle. Uses malonyl-CoA to add 2 carbons per cycle to the chain of long-chain fatty acids. Condensing enzyme that catalyzes the elongation of monounsaturated (MUFA) and polyunsaturated (PUFA) fatty acids that are involved in multiple biological processes as precursors of membrane lipids and lipid mediators. The polypeptide is Long chain fatty acid elongase 1 (Caenorhabditis elegans).